The following is a 155-amino-acid chain: Nuclear cap-binding protein subunit 2 (155 aa).

Residues Tyr19, Tyr42, 111-115, 122-126, and 132-133 each bind mRNA; these read RTDWD, RQYGR, and QV. Positions 39 to 117 constitute an RRM domain; sequence NTLYVGNLSF…RIIRTDWDAG (79 aa). Residues 122–155 form a disordered region; sequence RQYGRGKSGGQVRDEYRQDYDPARGGYGKVVSRP. Over residues 133–143 the composition is skewed to basic and acidic residues; that stretch reads VRDEYRQDYDP.

Belongs to the RRM NCBP2 family. Component of the nuclear cap-binding complex (CBC), a heterodimer composed of ncbp1/cbp80 and ncbp2/cbp20 that interacts with m7GpppG-capped RNA.

It localises to the nucleus. It is found in the cytoplasm. In terms of biological role, component of the cap-binding complex (CBC), which binds co-transcriptionally to the 5' cap of pre-mRNAs and is involved in various processes such as pre-mRNA splicing, translation regulation, nonsense-mediated mRNA decay, RNA-mediated gene silencing (RNAi) by microRNAs (miRNAs) and mRNA export. The CBC complex is involved in mRNA export from the nucleus, leading to the recruitment of the mRNA export machinery to the 5' end of mRNA and to mRNA export in a 5' to 3' direction through the nuclear pore. The CBC complex is also involved in mediating U snRNA and intronless mRNAs export from the nucleus. The CBC complex is essential for a pioneer round of mRNA translation, before steady state translation when the CBC complex is replaced by cytoplasmic cap-binding protein eIF4E. The pioneer round of mRNA translation mediated by the CBC complex plays a central role in nonsense-mediated mRNA decay (NMD), NMD only taking place in mRNAs bound to the CBC complex, but not on eIF4E-bound mRNAs. The CBC complex enhances NMD in mRNAs containing at least one exon-junction complex (EJC), promoting the interaction between upf1 and upf2. The CBC complex is also involved in 'failsafe' NMD, which is independent of the EJC complex, while it does not participate in Staufen-mediated mRNA decay (SMD). During cell proliferation, the CBC complex is also involved in microRNAs (miRNAs) biogenesis via its interaction with srrt/ars2, thereby being required for miRNA-mediated RNA interference. The CBC complex also acts as a negative regulator of parn, thereby acting as an inhibitor of mRNA deadenylation. In the CBC complex, ncbp2/cbp20 recognizes and binds capped RNAs (m7GpppG-capped RNA) but requires ncbp1/cbp80 to stabilize the movement of its N-terminal loop and lock the CBC into a high affinity cap-binding state with the cap structure. The conventional cap-binding complex with NCBP2 binds both small nuclear RNA (snRNA) and messenger (mRNA) and is involved in their export from the nucleus. In Salmo salar (Atlantic salmon), this protein is Nuclear cap-binding protein subunit 2 (ncbp2).